Here is a 138-residue protein sequence, read N- to C-terminus: Large ribosomal subunit protein bL17 (138 aa).

The protein belongs to the bacterial ribosomal protein bL17 family. In terms of assembly, part of the 50S ribosomal subunit. Contacts protein L32.

This chain is Large ribosomal subunit protein bL17, found in Granulibacter bethesdensis (strain ATCC BAA-1260 / CGDNIH1).